We begin with the raw amino-acid sequence, 379 residues long: Probable G-protein coupled receptor No18 (379 aa).

At Glu-5 to Thr-36 the chain is on the extracellular side. The N-linked (GlcNAc...) asparagine glycan is linked to Asn-17. A helical membrane pass occupies residues Ala-37 to Phe-58. Over Thr-59–Asn-68 the chain is Cytoplasmic. Residues Phe-69–Val-90 form a helical membrane-spanning segment. The Extracellular segment spans residues Ala-91–Met-107. Residues Cys-105 and Cys-184 are joined by a disulfide bond. The chain crosses the membrane as a helical span at residues Trp-108 to Leu-128. Residues Asp-129 to Arg-148 are Cytoplasmic-facing. A helical transmembrane segment spans residues Val-149 to Trp-171. Residues Asn-172–Ser-196 are Extracellular-facing. A helical membrane pass occupies residues Ser-197–Ala-218. At Thr-219 to Val-303 the chain is on the cytoplasmic side. The disordered stretch occupies residues Ala-234 to Pro-276. The chain crosses the membrane as a helical span at residues Leu-304–Val-325. The Extracellular portion of the chain corresponds to Pro-326–Asp-340. The helical transmembrane segment at Phe-341–Lys-362 threads the bilayer. Residues Asp-363–Asp-375 are Cytoplasmic-facing.

Belongs to the G-protein coupled receptor 1 family.

It is found in the cell membrane. In terms of biological role, probable G-protein coupled receptor for an amine. This chain is Probable G-protein coupled receptor No18, found in Amphibalanus amphitrite (Striped barnacle).